The following is a 1527-amino-acid chain: DNA (cytosine-5)-methyltransferase 1A (1527 aa).

2 disordered regions span residues 1–62 (MAKS…PKRA) and 661–718 (GDTK…KEIK). Acidic residues-rich tracts occupy residues 25–36 (EPVENENLESEF) and 664–692 (KEEDQNEPKEIDDDQEENEDNDAEEEVNV). The segment covering 709–718 (SSADTRKEIK) has biased composition (basic and acidic residues). 2 BAH domains span residues 742-874 (LSIS…FSLP) and 910-1049 (ITYN…KQLP). Residues 1092-1526 (LATLDIFAGC…RKLKQAIDAK (435 aa)) enclose the SAM-dependent MTase C5-type domain. Cys-1197 is a catalytic residue.

The protein belongs to the class I-like SAM-binding methyltransferase superfamily. C5-methyltransferase family. Expressed in roots and inflorescences. Expressed in roots, panicles, anthers, pistils, endosperm and imbibed embryos. Expressed in tissues containing actively replicating and dividing cells, such as shoot and root meristems.

Its subcellular location is the nucleus. The enzyme catalyses a 2'-deoxycytidine in DNA + S-adenosyl-L-methionine = a 5-methyl-2'-deoxycytidine in DNA + S-adenosyl-L-homocysteine + H(+). Functionally, probably methylates CpG residues and maintains DNA methylation. May be involved in methylation-dependent gene silencing. May play a minor role in the maintenance of DNA methylation. This chain is DNA (cytosine-5)-methyltransferase 1A, found in Oryza sativa subsp. japonica (Rice).